The sequence spans 902 residues: Viral-enhancing factor (902 aa).

The Peptidase M60 domain maps to 27-330 (HRRTEVGVVL…IFAWLYNPQR (304 aa)). Residues Asn-73, Asn-265, Asn-278, Asn-339, Asn-540, Asn-593, Asn-594, Asn-620, Asn-782, and Asn-840 are each glycosylated (N-linked (GlcNAc...) asparagine; by host).

Its function is as follows. Involved in disruption of the peritrophic membrane and fusion of nucleocapsids with midgut cells. The chain is Viral-enhancing factor (VEF) from Heliothis (HaGV).